Consider the following 337-residue polypeptide: tRNA(Ile)-lysidine synthase (337 aa).

Residue 40 to 45 (SGGQDS) participates in ATP binding.

This sequence belongs to the tRNA(Ile)-lysidine synthase family.

The protein resides in the cytoplasm. It catalyses the reaction cytidine(34) in tRNA(Ile2) + L-lysine + ATP = lysidine(34) in tRNA(Ile2) + AMP + diphosphate + H(+). Functionally, ligates lysine onto the cytidine present at position 34 of the AUA codon-specific tRNA(Ile) that contains the anticodon CAU, in an ATP-dependent manner. Cytidine is converted to lysidine, thus changing the amino acid specificity of the tRNA from methionine to isoleucine. The sequence is that of tRNA(Ile)-lysidine synthase from Parasynechococcus marenigrum (strain WH8102).